The primary structure comprises 226 residues: Ribonuclease 3 (226 aa).

In terms of domain architecture, RNase III spans 6-128 (MKKLQKFIGY…IIASIFLDSN (123 aa)). Glu41 contributes to the Mg(2+) binding site. The active site involves Asp45. Mg(2+) contacts are provided by Asn114 and Glu117. Glu117 is a catalytic residue. Residues 155–225 (DPKTRLQEYL…AQNALIRLEV (71 aa)) enclose the DRBM domain.

It belongs to the ribonuclease III family. As to quaternary structure, homodimer. The cofactor is Mg(2+).

Its subcellular location is the cytoplasm. The catalysed reaction is Endonucleolytic cleavage to 5'-phosphomonoester.. In terms of biological role, digests double-stranded RNA. Involved in the processing of primary rRNA transcript to yield the immediate precursors to the large and small rRNAs (23S and 16S). Processes some mRNAs, and tRNAs when they are encoded in the rRNA operon. Processes pre-crRNA and tracrRNA of type II CRISPR loci if present in the organism. The polypeptide is Ribonuclease 3 (Buchnera aphidicola subsp. Cinara cedri (strain Cc)).